Consider the following 297-residue polypeptide: Cytosolic Fe-S cluster assembly factor CFD1 (297 aa).

Position 15-22 (15-22 (GKGGVGKS)) interacts with ATP. Residues C216 and C219 each contribute to the [4Fe-4S] cluster site.

This sequence belongs to the Mrp/NBP35 ATP-binding proteins family. NUBP2/CFD1 subfamily. In terms of assembly, heterotetramer of 2 NBP35 and 2 CFD1 chains. It depends on [4Fe-4S] cluster as a cofactor.

Its subcellular location is the cytoplasm. Its function is as follows. Component of the cytosolic iron-sulfur (Fe/S) protein assembly (CIA) machinery. Required for maturation of extramitochondrial Fe-S proteins. The NBP35-CFD1 heterotetramer forms a Fe-S scaffold complex, mediating the de novo assembly of an Fe-S cluster and its transfer to target apoproteins. The polypeptide is Cytosolic Fe-S cluster assembly factor CFD1 (Phaeosphaeria nodorum (strain SN15 / ATCC MYA-4574 / FGSC 10173) (Glume blotch fungus)).